Reading from the N-terminus, the 400-residue chain is Argininosuccinate synthase (400 aa).

ATP is bound by residues Ala11–Ser19 and Ala38. 2 residues coordinate L-citrulline: Tyr89 and Ser94. An ATP-binding site is contributed by Gly119. Positions 121, 125, and 126 each coordinate L-aspartate. Asn125 serves as a coordination point for L-citrulline. 5 residues coordinate L-citrulline: Arg129, Ser178, Ser187, Glu263, and Tyr275.

This sequence belongs to the argininosuccinate synthase family. Type 1 subfamily. As to quaternary structure, homotetramer.

The protein resides in the cytoplasm. It catalyses the reaction L-citrulline + L-aspartate + ATP = 2-(N(omega)-L-arginino)succinate + AMP + diphosphate + H(+). Its pathway is amino-acid biosynthesis; L-arginine biosynthesis; L-arginine from L-ornithine and carbamoyl phosphate: step 2/3. The protein is Argininosuccinate synthase of Desulfatibacillum aliphaticivorans.